We begin with the raw amino-acid sequence, 246 residues long: MKMTKSALVTGASRGIGRSIALQLAEEGYNVAVNYAGSKEKAEAVVEEIKAKGVDSFAIQANVADADEVKAMIKEVVSQFGSLDVLVNNAGITRDNLLMRMKEQEWDDVIDTNLKGVFNCIQKATPQMLRQRSGAIINLSSVVGAVGNPGQANYVATKAGVIGLTKSAARELASRGITVNAVAPGFIVSDMTDALSDELKEQMLTQIPLARFGQDTDIANTVAFLASDKAKYITGQTIHVNGGMYM.

NADP(+) is bound by residues 11 to 14, 62 to 63, and asparagine 89; these read GASR and NV. Position 141 (serine 141) interacts with substrate. The Proton acceptor role is filled by tyrosine 154. NADP(+) contacts are provided by residues 154 to 158 and isoleucine 187; that span reads YVATK.

Belongs to the short-chain dehydrogenases/reductases (SDR) family. Homotetramer.

The enzyme catalyses a (3R)-hydroxyacyl-[ACP] + NADP(+) = a 3-oxoacyl-[ACP] + NADPH + H(+). Its pathway is lipid metabolism; fatty acid biosynthesis. In terms of biological role, catalyzes the NADPH-dependent reduction of beta-ketoacyl-ACP substrates to beta-hydroxyacyl-ACP products, the first reductive step in the elongation cycle of fatty acid biosynthesis. The chain is 3-oxoacyl-[acyl-carrier-protein] reductase FabG (fabG) from Staphylococcus aureus (strain Mu50 / ATCC 700699).